A 465-amino-acid chain; its full sequence is Uronate isomerase (465 aa).

It belongs to the metallo-dependent hydrolases superfamily. Uronate isomerase family.

It catalyses the reaction D-glucuronate = D-fructuronate. The catalysed reaction is aldehydo-D-galacturonate = keto-D-tagaturonate. Its pathway is carbohydrate metabolism; pentose and glucuronate interconversion. This chain is Uronate isomerase, found in Streptococcus equi subsp. zooepidemicus (strain H70).